A 447-amino-acid chain; its full sequence is Methylenetetrahydrofolate--tRNA-(uracil-5-)-methyltransferase TrmFO (447 aa).

FAD is bound at residue 10-15 (GAGLAG).

It belongs to the MnmG family. TrmFO subfamily. FAD is required as a cofactor.

The protein localises to the cytoplasm. It carries out the reaction uridine(54) in tRNA + (6R)-5,10-methylene-5,6,7,8-tetrahydrofolate + NADH + H(+) = 5-methyluridine(54) in tRNA + (6S)-5,6,7,8-tetrahydrofolate + NAD(+). The enzyme catalyses uridine(54) in tRNA + (6R)-5,10-methylene-5,6,7,8-tetrahydrofolate + NADPH + H(+) = 5-methyluridine(54) in tRNA + (6S)-5,6,7,8-tetrahydrofolate + NADP(+). Functionally, catalyzes the folate-dependent formation of 5-methyl-uridine at position 54 (M-5-U54) in all tRNAs. In Symbiobacterium thermophilum (strain DSM 24528 / JCM 14929 / IAM 14863 / T), this protein is Methylenetetrahydrofolate--tRNA-(uracil-5-)-methyltransferase TrmFO.